The sequence spans 420 residues: Glucose-1-phosphate adenylyltransferase (420 aa).

Alpha-D-glucose 1-phosphate is bound by residues Tyr107, Gly172, 187–188, and Ser205; that span reads EK.

Belongs to the bacterial/plant glucose-1-phosphate adenylyltransferase family. In terms of assembly, homotetramer.

The enzyme catalyses alpha-D-glucose 1-phosphate + ATP + H(+) = ADP-alpha-D-glucose + diphosphate. Its pathway is glycan biosynthesis; glycogen biosynthesis. Involved in the biosynthesis of ADP-glucose, a building block required for the elongation reactions to produce glycogen. Catalyzes the reaction between ATP and alpha-D-glucose 1-phosphate (G1P) to produce pyrophosphate and ADP-Glc. This Rhizobium etli (strain ATCC 51251 / DSM 11541 / JCM 21823 / NBRC 15573 / CFN 42) protein is Glucose-1-phosphate adenylyltransferase.